A 924-amino-acid polypeptide reads, in one-letter code: Protein SMAX1-LIKE 2 (924 aa).

Residues 8–181 form the Clp R domain; the sequence is IQQTLTPEAA…SAIEQSLIGN (174 aa). The segment at 12–83 is repeat 1; the sequence is LTPEAATVLN…LCFSVALERL (72 aa). The span at 86–105 shows a compositional bias: low complexity; that stretch reads TSTTTTTTSSSSSSSPSQTQ. Positions 86–107 are disordered; sequence TSTTTTTTSSSSSSSPSQTQEP. A repeat 2 region spans residues 109–181; sequence LSNALTAALK…SAIEQSLIGN (73 aa). Residues 522-552 form a disordered region; sequence TRSDITPPGSPVGTDLVLGRPNRGLSSPEKK. The EAR signature appears at 780–784; it reads FDLNE.

It belongs to the ClpA/ClpB family. As to quaternary structure, interacts probably with TPL/TPR in an EAR-motif dependent manner. In terms of tissue distribution, expressed in seedlings and leaves. Detected in roots and axillary branches.

In terms of biological role, probable component of a transcriptional corepressor complex that acts specifically in the karrikin pathway. Controls seedling growth redundantly with SMAX1, but is not involved in leaf morphology, shoot branching or germination control. This chain is Protein SMAX1-LIKE 2, found in Arabidopsis thaliana (Mouse-ear cress).